A 436-amino-acid chain; its full sequence is Magnesium transporter MRS2-4 (436 aa).

Residues 1–56 form a disordered region; that stretch reads MGKGPLSFRRLSSIRHRKKGSAVKDDSAQTSTPSSPPPPLPIHAGGSAVGATGKAK. A compositionally biased stretch (basic residues) spans 12 to 21; it reads SSIRHRKKGS. Low complexity predominate over residues 44–53; it reads AGGSAVGATG. 2 helical membrane passes run 372–392 and 405–425; these read LTLT…SLFG and VFGY…MVTL. Residues 392–394 carry the Required for magnesium transport activity motif; that stretch reads GMN.

This sequence belongs to the CorA metal ion transporter (MIT) (TC 1.A.35.5) family. Expressed in the whole plant except roots.

The protein localises to the membrane. Functionally, magnesium transporter that may mediate the influx of magnesium. This is Magnesium transporter MRS2-4 (MRS2-4) from Arabidopsis thaliana (Mouse-ear cress).